Here is a 462-residue protein sequence, read N- to C-terminus: Sugar transporter ERD6-like 12 (462 aa).

The next 12 helical transmembrane spans lie at 25-45 (LLIFSTFIIVSASFTFGAAIG), 62-82 (LAQFSLFGSLSTFGGMIGAIF), 101-121 (LFCITGWLAISLAKDIIWLDM), 124-144 (FLVGIGVGLISYVVPVYIAEI), 151-171 (GAFTFSNQLLQNCGVAVVYYF), 179-199 (TLAIIGSIPCWIQVIGLFFIP), 262-282 (LTIGIGLMLLQQLCGTAGISS), 297-317 (IGMMVLSLIVVPKSLMGLILV), 326-346 (LMTSALGLCLSCITLAVAFGV), 358-378 (IFCFIGILSFTMMFAIGMGAL), 399-419 (VTIANWFTGWIANYAFNFMLV), and 424-444 (GTFIISAIICGATIVFTWCLV).

The protein belongs to the major facilitator superfamily. Sugar transporter (TC 2.A.1.1) family.

The protein localises to the membrane. Functionally, sugar transporter. The sequence is that of Sugar transporter ERD6-like 12 (SUGTL5) from Arabidopsis thaliana (Mouse-ear cress).